A 111-amino-acid polypeptide reads, in one-letter code: Large ribosomal subunit protein uL22 (111 aa).

This sequence belongs to the universal ribosomal protein uL22 family. Part of the 50S ribosomal subunit.

In terms of biological role, this protein binds specifically to 23S rRNA; its binding is stimulated by other ribosomal proteins, e.g. L4, L17, and L20. It is important during the early stages of 50S assembly. It makes multiple contacts with different domains of the 23S rRNA in the assembled 50S subunit and ribosome. The globular domain of the protein is located near the polypeptide exit tunnel on the outside of the subunit, while an extended beta-hairpin is found that lines the wall of the exit tunnel in the center of the 70S ribosome. This chain is Large ribosomal subunit protein uL22, found in Clostridium perfringens (strain ATCC 13124 / DSM 756 / JCM 1290 / NCIMB 6125 / NCTC 8237 / Type A).